Here is a 104-residue protein sequence, read N- to C-terminus: Replication restart protein PriB (104 aa).

Residues 1–101 (MTNRLVLSGT…LHAEQIELID (101 aa)) enclose the SSB domain.

This sequence belongs to the PriB family. As to quaternary structure, homodimer. Interacts with PriA and DnaT. Component of the replication restart primosome. Primosome assembly occurs via a 'hand-off' mechanism. PriA binds to replication forks, subsequently PriB then DnaT bind; DnaT then displaces ssDNA to generate the helicase loading substrate.

Involved in the restart of stalled replication forks, which reloads the replicative helicase on sites other than the origin of replication; the PriA-PriB pathway is the major replication restart pathway. During primosome assembly it facilitates complex formation between PriA and DnaT on DNA; stabilizes PriA on DNA. Stimulates the DNA unwinding activity of PriA helicase. This is Replication restart protein PriB from Shigella dysenteriae serotype 1 (strain Sd197).